Reading from the N-terminus, the 81-residue chain is MRITIYTRNDCVQCHATKRAMENRGFDFEMINVDRVPEAAEALRAQGFRQLPVVIAGDLSWSGFRPDMINRLHPAPHAASA.

The 81-residue stretch at 1-81 (MRITIYTRND…LHPAPHAASA (81 aa)) folds into the Glutaredoxin domain. A disulfide bridge connects residues C11 and C14.

The protein belongs to the glutaredoxin family.

In terms of biological role, electron transport system for the ribonucleotide reductase system NrdEF. The polypeptide is Glutaredoxin-like protein NrdH (nrdH) (Escherichia coli O157:H7).